A 199-amino-acid polypeptide reads, in one-letter code: NAD(P)H dehydrogenase (quinone) (199 aa).

The Flavodoxin-like domain occupies V4–V190. Residues S10 to V15 and T78 to Y80 contribute to the FMN site. Position 12 (W12) interacts with NAD(+). W98 serves as a coordination point for substrate. FMN contacts are provided by residues S113–G119 and H134.

This sequence belongs to the WrbA family. The cofactor is FMN.

It carries out the reaction a quinone + NADH + H(+) = a quinol + NAD(+). The enzyme catalyses a quinone + NADPH + H(+) = a quinol + NADP(+). This Methylorubrum extorquens (strain CM4 / NCIMB 13688) (Methylobacterium extorquens) protein is NAD(P)H dehydrogenase (quinone).